The chain runs to 290 residues: Pyridoxal kinase PdxY (290 aa).

Substrate is bound at residue Ser14. Positions 116 and 153 each coordinate ATP. Asp226 serves as a coordination point for substrate.

It belongs to the pyridoxine kinase family. PdxY subfamily. In terms of assembly, homodimer. Mg(2+) serves as cofactor.

The catalysed reaction is pyridoxal + ATP = pyridoxal 5'-phosphate + ADP + H(+). It participates in cofactor metabolism; pyridoxal 5'-phosphate salvage; pyridoxal 5'-phosphate from pyridoxal: step 1/1. Functionally, pyridoxal kinase involved in the salvage pathway of pyridoxal 5'-phosphate (PLP). Catalyzes the phosphorylation of pyridoxal to PLP. The chain is Pyridoxal kinase PdxY from Rubrobacter xylanophilus (strain DSM 9941 / JCM 11954 / NBRC 16129 / PRD-1).